A 30-amino-acid polypeptide reads, in one-letter code: Trypsin inhibitor 1 (30 aa).

3 disulfide bridges follow: Cys-4-Cys-21, Cys-11-Cys-23, and Cys-17-Cys-29.

The protein belongs to the protease inhibitor I7 (squash-type serine protease inhibitor) family.

Its subcellular location is the secreted. Functionally, inhibits trypsin. This is Trypsin inhibitor 1 from Citrullus lanatus (Watermelon).